A 97-amino-acid polypeptide reads, in one-letter code: uncharacterized protein (97 aa).

The N-terminal stretch at 1–16 (MKQTVLLLFTALFLSG) is a signal peptide. Cysteine 17 carries the N-palmitoyl cysteine lipid modification. Cysteine 17 carries the S-diacylglycerol cysteine lipid modification.

The protein resides in the cell membrane. This is an uncharacterized protein from Bacillus subtilis (strain 168).